The chain runs to 685 residues: Sulfate transporter 4.1, chloroplastic (685 aa).

The N-terminal 23 residues, 1 to 23, are a transit peptide targeting the chloroplast; the sequence is MSYASLSVKDLTSLVSRSGTGSS. Residues 15-26 are compositionally biased toward low complexity; that stretch reads VSRSGTGSSSSL. A disordered region spans residues 15–53; it reads VSRSGTGSSSSLKPPGQTRPVKVIPLQHPDTSNEARPPS. 12 helical membrane passes run 97-117, 122-142, 147-167, 175-195, 203-223, 255-275, 283-303, 332-352, 369-389, 406-426, 434-454, and 473-493; these read LDLMAGITVGIMLVPQAMSYA, LPPIYGLYSSFVPVFVYAIFG, LAIGPVALVSLLVSNALGGIA, IELAILLALLVGILECIMGLL, FISHSVISGFTSASAIVIGLS, WPPFVMGSLILVILQVMKHVG, FLRAAAPLTGIVLGTTIAKVF, TLLPTSALITGVAILESVGIA, LFGLGVANILGSLFSAYPATG, LSGLITGIIIGCSLLFLTPMF, LAAIVISAVSGLVDYDEAIFL, and LFFGIEIGVLVGVGFSLAFVI. An STAS domain is found at 518-642; sequence QYPEAYTYNG…VRVHDAVQVC (125 aa).

Belongs to the SLC26A/SulP transporter (TC 2.A.53) family. In terms of tissue distribution, expressed both in roots and leaves.

The protein resides in the plastid. The protein localises to the chloroplast membrane. Functionally, h(+)/sulfate cotransporter that may play a role in the regulation of sulfate assimilation. The chain is Sulfate transporter 4.1, chloroplastic (SULTR4;1) from Arabidopsis thaliana (Mouse-ear cress).